Consider the following 526-residue polypeptide: NAD(P)H-quinone oxidoreductase chain 4 2 (526 aa).

The next 14 membrane-spanning stretches (helical) occupy residues 6-26 (FPWL…LPLI), 36-56 (WYAL…FYTG), 91-111 (LILL…PVSF), 113-133 (PKLF…VFAV), 137-157 (LLFF…LSIW), 169-189 (FILY…TMAF), 212-232 (LLLY…FPLH), 243-263 (TAPA…YALL), 275-295 (ALFG…AALT), 306-326 (IAYS…SFTD), 332-352 (AMLQ…MVGA), 375-397 (IFAM…GFVA), 417-437 (VIIV…LLSM), and 464-484 (VFVI…PKAV).

Belongs to the complex I subunit 4 family.

It is found in the cellular thylakoid membrane. It catalyses the reaction a plastoquinone + NADH + (n+1) H(+)(in) = a plastoquinol + NAD(+) + n H(+)(out). It carries out the reaction a plastoquinone + NADPH + (n+1) H(+)(in) = a plastoquinol + NADP(+) + n H(+)(out). NDH-1 shuttles electrons from NAD(P)H, via FMN and iron-sulfur (Fe-S) centers, to quinones in the respiratory chain. The immediate electron acceptor for the enzyme in this species is believed to be plastoquinone. Couples the redox reaction to proton translocation (for every two electrons transferred, four hydrogen ions are translocated across the cytoplasmic membrane), and thus conserves the redox energy in a proton gradient. The polypeptide is NAD(P)H-quinone oxidoreductase chain 4 2 (Picosynechococcus sp. (strain ATCC 27264 / PCC 7002 / PR-6) (Agmenellum quadruplicatum)).